The sequence spans 64 residues: MPKQKTHSGAKKRFKITGSGKVMKQQAGMRHNLEVKGSDRKRRLNADQVVPEVDAKFVRRMLGK.

Belongs to the bacterial ribosomal protein bL35 family.

This chain is Large ribosomal subunit protein bL35, found in Leifsonia xyli subsp. xyli (strain CTCB07).